A 644-amino-acid chain; its full sequence is Subversion of eukaryotic traffic protein A (644 aa).

The interval 1-400 (MYKIYSYLGW…FHTLLSQVSD (400 aa)) is glucosyltransferase. A ptdIns(3)P-binding and localization domain region spans residues 401 to 644 (PVNPTAHELK…EYDNNHGLRI (244 aa)).

In terms of processing, ubiquitinated and polyubiquitinated when ectopically produced in both yeast and mammalian cells; however it is unsure if this modification occurs during the L.pneumophila infection of host cells.

The protein resides in the secreted. Secreted effector that interferes with vesicular trafficking of host cells. Possesses glucohydrolase and mono-O-glucosyltransferase activity by using UDP-glucose as a sugar donor substrate. Is able to glucosylate histones H4 and H3.1 in vitro, but it is unlikely that histones are the natural substrates for SetA. May glycosylate a component of the host cell vesicle trafficking machinery during L.pneumophila infection. Binds with high specificity to phosphatidylinositol 3-phosphate (PtdIns(3)P), (with a dissociation constant value of 809 nM), which guides SetA to the cytosolic leaflet of the early phagosome of the host cell. The polypeptide is Subversion of eukaryotic traffic protein A (setA) (Legionella pneumophila subsp. pneumophila (strain Philadelphia 1 / ATCC 33152 / DSM 7513)).